Reading from the N-terminus, the 314-residue chain is Cytosolic sulfotransferase 3 (314 aa).

71-76 (KSGTLW) serves as a coordination point for 3'-phosphoadenylyl sulfate. Histidine 121 acts as the Proton acceptor in catalysis. 3'-phosphoadenylyl sulfate contacts are provided by residues arginine 143, serine 151, tyrosine 209, and 275-277 (RKG).

This sequence belongs to the sulfotransferase 1 family.

The protein resides in the cytoplasm. Sulfotransferase that utilizes 3'-phospho-5'-adenylyl sulfate (PAPS) as sulfonate donor. This is Cytosolic sulfotransferase 3 (SOT3) from Arabidopsis thaliana (Mouse-ear cress).